Consider the following 29-residue polypeptide: Brevinin-2Td (29 aa).

C23 and C29 are oxidised to a cystine.

This sequence belongs to the frog skin active peptide (FSAP) family. Brevinin subfamily. In terms of tissue distribution, expressed by the skin glands.

The protein localises to the secreted. In terms of biological role, antibacterial activity against representative Gram-negative and Gram-positive bacteria. The chain is Brevinin-2Td from Rana temporaria (European common frog).